A 191-amino-acid chain; its full sequence is Glutathione-dependent formaldehyde-activating enzyme (191 aa).

The CENP-V/GFA domain occupies 22–169 (FAGGTLQCLC…LTELGLTPYD (148 aa)). Positions 29, 31, 50, 52, 55, 97, and 100 each coordinate Zn(2+).

This sequence belongs to the Gfa family. Zn(2+) is required as a cofactor.

The catalysed reaction is S-(hydroxymethyl)glutathione = glutathione + formaldehyde. Its pathway is one-carbon metabolism; formaldehyde degradation; formate from formaldehyde (glutathione route): step 1/3. Its function is as follows. Catalyzes the condensation of formaldehyde and glutathione to S-hydroxymethylglutathione. This Xanthomonas campestris pv. campestris (strain B100) protein is Glutathione-dependent formaldehyde-activating enzyme.